Consider the following 552-residue polypeptide: Glutamine--tRNA ligase (552 aa).

Residues 34-44 (PEPNGYLHIGH) carry the 'HIGH' region motif. Residues 35 to 37 (EPN) and 41 to 47 (HIGHAKS) each bind ATP. Residues aspartate 67 and tyrosine 212 each coordinate L-glutamine. ATP-binding positions include threonine 231, 261 to 262 (RL), and 269 to 271 (MSK). Residues 268 to 272 (LMSKR) carry the 'KMSKS' region motif.

The protein belongs to the class-I aminoacyl-tRNA synthetase family. As to quaternary structure, monomer.

It is found in the cytoplasm. It carries out the reaction tRNA(Gln) + L-glutamine + ATP = L-glutaminyl-tRNA(Gln) + AMP + diphosphate. The sequence is that of Glutamine--tRNA ligase from Hamiltonella defensa subsp. Acyrthosiphon pisum (strain 5AT).